Consider the following 444-residue polypeptide: 3-phosphoshikimate 1-carboxyvinyltransferase (444 aa).

The 3-phosphoshikimate site is built by Lys-29, Ser-30, and Arg-34. Lys-29 lines the phosphoenolpyruvate pocket. The phosphoenolpyruvate site is built by Gly-103 and Arg-132. Residues Ser-177, Gln-179, Asp-329, and Lys-356 each contribute to the 3-phosphoshikimate site. Gln-179 is a phosphoenolpyruvate binding site. Catalysis depends on Asp-329, which acts as the Proton acceptor. Residues Arg-360 and Arg-402 each contribute to the phosphoenolpyruvate site.

This sequence belongs to the EPSP synthase family. As to quaternary structure, monomer.

Its subcellular location is the cytoplasm. It carries out the reaction 3-phosphoshikimate + phosphoenolpyruvate = 5-O-(1-carboxyvinyl)-3-phosphoshikimate + phosphate. It participates in metabolic intermediate biosynthesis; chorismate biosynthesis; chorismate from D-erythrose 4-phosphate and phosphoenolpyruvate: step 6/7. In terms of biological role, catalyzes the transfer of the enolpyruvyl moiety of phosphoenolpyruvate (PEP) to the 5-hydroxyl of shikimate-3-phosphate (S3P) to produce enolpyruvyl shikimate-3-phosphate and inorganic phosphate. This Prochlorococcus marinus (strain NATL2A) protein is 3-phosphoshikimate 1-carboxyvinyltransferase.